A 251-amino-acid chain; its full sequence is Pyrroloquinoline-quinone synthase (251 aa).

Belongs to the PqqC family.

It catalyses the reaction 6-(2-amino-2-carboxyethyl)-7,8-dioxo-1,2,3,4,7,8-hexahydroquinoline-2,4-dicarboxylate + 3 O2 = pyrroloquinoline quinone + 2 H2O2 + 2 H2O + H(+). Its pathway is cofactor biosynthesis; pyrroloquinoline quinone biosynthesis. In terms of biological role, ring cyclization and eight-electron oxidation of 3a-(2-amino-2-carboxyethyl)-4,5-dioxo-4,5,6,7,8,9-hexahydroquinoline-7,9-dicarboxylic-acid to PQQ. This is Pyrroloquinoline-quinone synthase from Pseudomonas savastanoi pv. phaseolicola (strain 1448A / Race 6) (Pseudomonas syringae pv. phaseolicola (strain 1448A / Race 6)).